The primary structure comprises 204 residues: Urease accessory protein UreG (204 aa).

A GTP-binding site is contributed by 15 to 22 (GPVGSGKT).

It belongs to the SIMIBI class G3E GTPase family. UreG subfamily. As to quaternary structure, homodimer. UreD, UreF and UreG form a complex that acts as a GTP-hydrolysis-dependent molecular chaperone, activating the urease apoprotein by helping to assemble the nickel containing metallocenter of UreC. The UreE protein probably delivers the nickel.

Its subcellular location is the cytoplasm. Facilitates the functional incorporation of the urease nickel metallocenter. This process requires GTP hydrolysis, probably effectuated by UreG. This Methylobacterium nodulans (strain LMG 21967 / CNCM I-2342 / ORS 2060) protein is Urease accessory protein UreG.